A 156-amino-acid chain; its full sequence is MPRKGPAPKREVLPDPIYNSKLVTRLINRLMLDGKRGKASKILYNAFDIIEKETGSEPTGVFEEAMNNIMPVLEVKARRVGGSNYQVPIEVRPDRRTTLGLRWLVNYARLRGEHTMPERLAREIMDAANNTGASVKKREDTHKMAEANRAFAHYRW.

The protein belongs to the universal ribosomal protein uS7 family. As to quaternary structure, part of the 30S ribosomal subunit. Contacts proteins S9 and S11.

Functionally, one of the primary rRNA binding proteins, it binds directly to 16S rRNA where it nucleates assembly of the head domain of the 30S subunit. Is located at the subunit interface close to the decoding center, probably blocks exit of the E-site tRNA. In Pediococcus pentosaceus (strain ATCC 25745 / CCUG 21536 / LMG 10740 / 183-1w), this protein is Small ribosomal subunit protein uS7.